We begin with the raw amino-acid sequence, 316 residues long: N-acetyl-gamma-glutamyl-phosphate reductase (316 aa).

The active site involves cysteine 136.

This sequence belongs to the NAGSA dehydrogenase family. Type 1 subfamily.

The protein localises to the cytoplasm. The enzyme catalyses N-acetyl-L-glutamate 5-semialdehyde + phosphate + NADP(+) = N-acetyl-L-glutamyl 5-phosphate + NADPH + H(+). It participates in amino-acid biosynthesis; L-arginine biosynthesis; N(2)-acetyl-L-ornithine from L-glutamate: step 3/4. Catalyzes the NADPH-dependent reduction of N-acetyl-5-glutamyl phosphate to yield N-acetyl-L-glutamate 5-semialdehyde. This Xanthomonas campestris pv. campestris (strain ATCC 33913 / DSM 3586 / NCPPB 528 / LMG 568 / P 25) protein is N-acetyl-gamma-glutamyl-phosphate reductase.